Reading from the N-terminus, the 408-residue chain is Two-pore potassium channel 5 (408 aa).

Disordered regions lie at residues 1 to 29 (MEPLISPQPRFRLQPIPENPSSSSSSASI) and 58 to 82 (QSVQDDKEDQDSDSDETNRFLSQTR). Over residues 15–29 (PIPENPSSSSSSASI) the composition is skewed to low complexity. Residues 22 to 115 (SSSSSASITI…TKKPSPVSKS (94 aa)) are Stromal-facing. Acidic residues predominate over residues 63–72 (DKEDQDSDSD). A helical transmembrane segment spans residues 116-136 (IIRQAIFLLIVYLTLGVSIYS). Residues 152-171 (DALYFCIVTMCTIGYGDIAP) constitute an intramembrane region (pore-forming). A helical transmembrane segment spans residues 178–198 (IFAVVFVLFGFGFLDILLSGV). At 199-248 (VNYVLDLQESMILTGIQTRQHHQHHHHHRFSAKDYIIDFEKGRMRIRMKV) the chain is on the stromal side. A helical transmembrane segment spans residues 249–269 (CLALCVVVLCIGVGALVLHFV). Positions 276–295 (DSVYLSVMSVTTVGYGDRAF) form an intramembrane region, pore-forming. A helical transmembrane segment spans residues 302–322 (LFAAVWLLVSTLAVARAFLYL). The Stromal segment spans residues 323 to 408 (AEARIDRRHR…TLPDLLGDPL (86 aa)). 2 consecutive EF-hand domains span residues 339–374 (LNREITVDDLLKADTYQHGFISKSEYIVLKLKEMGK) and 378–408 (KDIDQVVIQFEKLDPNQIGKITLPDLLGDPL). 6 residues coordinate Ca(2+): D352, E363, D391, N393, K397, and D402.

This sequence belongs to the two pore domain potassium channel (TC 1.A.1.7) family. As to quaternary structure, homodimer. In terms of tissue distribution, expressed in hydathodes and the vascular tissues of roots, stems, leaves and flowers.

It is found in the vacuole membrane. In terms of biological role, probable voltage-independent potassium-selective tonoplast ion channel. The chain is Two-pore potassium channel 5 (TPK5) from Arabidopsis thaliana (Mouse-ear cress).